The following is a 673-amino-acid chain: Protein kinase ORF74 (673 aa).

Residues 128–404 enclose the Protein kinase domain; sequence TDTDEAVARG…ARELLVYPRY (277 aa). The active-site Proton acceptor is the D252. The tract at residues 340 to 364 is disordered; the sequence is MDNDALDSRRTGRDGDPVNPEGFGT. Positions 345–355 are enriched in basic and acidic residues; it reads LDSRRTGRDGD.

This sequence belongs to the protein kinase superfamily. Ser/Thr protein kinase family.

The catalysed reaction is L-seryl-[protein] + ATP = O-phospho-L-seryl-[protein] + ADP + H(+). It carries out the reaction L-threonyl-[protein] + ATP = O-phospho-L-threonyl-[protein] + ADP + H(+). In Ictalurid herpesvirus 1 (strain Auburn) (IcHV-1), this protein is Protein kinase ORF74 (ORF74).